Reading from the N-terminus, the 342-residue chain is Flap endonuclease 1 (342 aa).

The tract at residues 1-99 (MGVKIGELIE…RAIEERVRAR (99 aa)) is N-domain. Residues Asp28, Asp81, Glu153, Glu155, Asp174, Asp176, and Asp237 each contribute to the Mg(2+) site. The tract at residues 117–259 (EARKYAQAAL…RALELVKKYK (143 aa)) is I-domain.

This sequence belongs to the XPG/RAD2 endonuclease family. FEN1 subfamily. Interacts with PCNA. PCNA stimulates the nuclease activity without altering cleavage specificity. Mg(2+) serves as cofactor.

Structure-specific nuclease with 5'-flap endonuclease and 5'-3' exonuclease activities involved in DNA replication and repair. During DNA replication, cleaves the 5'-overhanging flap structure that is generated by displacement synthesis when DNA polymerase encounters the 5'-end of a downstream Okazaki fragment. Binds the unpaired 3'-DNA end and kinks the DNA to facilitate 5' cleavage specificity. Cleaves one nucleotide into the double-stranded DNA from the junction in flap DNA, leaving a nick for ligation. Also involved in the base excision repair (BER) pathway. Acts as a genome stabilization factor that prevents flaps from equilibrating into structures that lead to duplications and deletions. Also possesses 5'-3' exonuclease activity on nicked or gapped double-stranded DNA. This Korarchaeum cryptofilum (strain OPF8) protein is Flap endonuclease 1.